A 240-amino-acid polypeptide reads, in one-letter code: Uridylate kinase (240 aa).

Lys13–Gly16 is an ATP binding site. Residue Gly55 coordinates UMP. 2 residues coordinate ATP: Gly56 and Arg60. UMP-binding positions include Asp76 and Thr137–Thr144. Positions 164, 170, and 173 each coordinate ATP.

The protein belongs to the UMP kinase family. As to quaternary structure, homohexamer.

The protein localises to the cytoplasm. It carries out the reaction UMP + ATP = UDP + ADP. The protein operates within pyrimidine metabolism; CTP biosynthesis via de novo pathway; UDP from UMP (UMPK route): step 1/1. With respect to regulation, inhibited by UTP. Its function is as follows. Catalyzes the reversible phosphorylation of UMP to UDP. This Helicobacter pylori (strain ATCC 700392 / 26695) (Campylobacter pylori) protein is Uridylate kinase.